The primary structure comprises 365 residues: Regulatory protein RapG (365 aa).

TPR repeat units lie at residues 135 to 168, 169 to 202, 209 to 242, 244 to 284, and 326 to 359; these read GKLY…KKKL, ASAL…TSEL, AQLL…DEYA, SAYY…EPNR, and RELS…EELI.

It belongs to the Rap family.

Its subcellular location is the cytoplasm. With respect to regulation, inhibited by PhrG. Functionally, involved in the regulation of expression of DegU-controlled genes. Inhibits the binding of DegU to the promoter regions of aprE, coding for an extracellular alkaline protease, and comK, a master regulator for development of genetic competence. RapG does not stimulate dephosphorylation of DegU-P. In Bacillus subtilis (strain 168), this protein is Regulatory protein RapG (rapG).